Consider the following 419-residue polypeptide: Probable dual-specificity RNA methyltransferase RlmN (419 aa).

The disordered stretch occupies residues 1-21 (MTAESDSPDGPVSAGTGRPVR). Glu-124 acts as the Proton acceptor in catalysis. Residues 130 to 369 (YPDRATVCVS…ATTVRDTRGR (240 aa)) enclose the Radical SAM core domain. Cys-137 and Cys-375 are joined by a disulfide. [4Fe-4S] cluster-binding residues include Cys-144, Cys-148, and Cys-151. S-adenosyl-L-methionine-binding positions include 199-200 (GE), Ser-233, 256-258 (SLH), and Asn-332. Cys-375 functions as the S-methylcysteine intermediate in the catalytic mechanism. A disordered region spans residues 383 to 419 (AGRARRVESARPVESARPVGVAGAASGSPAHGSRVLR). The segment covering 397–419 (SARPVGVAGAASGSPAHGSRVLR) has biased composition (low complexity).

Belongs to the radical SAM superfamily. RlmN family. It depends on [4Fe-4S] cluster as a cofactor.

Its subcellular location is the cytoplasm. The enzyme catalyses adenosine(2503) in 23S rRNA + 2 reduced [2Fe-2S]-[ferredoxin] + 2 S-adenosyl-L-methionine = 2-methyladenosine(2503) in 23S rRNA + 5'-deoxyadenosine + L-methionine + 2 oxidized [2Fe-2S]-[ferredoxin] + S-adenosyl-L-homocysteine. It catalyses the reaction adenosine(37) in tRNA + 2 reduced [2Fe-2S]-[ferredoxin] + 2 S-adenosyl-L-methionine = 2-methyladenosine(37) in tRNA + 5'-deoxyadenosine + L-methionine + 2 oxidized [2Fe-2S]-[ferredoxin] + S-adenosyl-L-homocysteine. In terms of biological role, specifically methylates position 2 of adenine 2503 in 23S rRNA and position 2 of adenine 37 in tRNAs. This chain is Probable dual-specificity RNA methyltransferase RlmN, found in Frankia alni (strain DSM 45986 / CECT 9034 / ACN14a).